The chain runs to 501 residues: Protein YLS7 (501 aa).

Residues 25 to 45 (IAFAIGGLTSFVIFASLLLFT) form a helical; Signal-anchor for type II membrane protein membrane-spanning segment. The tract at residues 69–131 (HSIHDPDRNP…NVSIDEEATQ (63 aa)) is disordered. A compositionally biased stretch (low complexity) spans 78-89 (PSPVSSSESPPV). Residues 94 to 113 (SDDKVLPKGSHDSNDVRLGE) show a composition bias toward basic and acidic residues. The segment covering 114 to 124 (ETNSGKSSNVS) has biased composition (polar residues). Positions 211 to 213 (GDS) match the GDS motif motif. The disordered stretch occupies residues 438–467 (RHDGHPGPYRSPDPKKITKRGPDGQPPPQD). Residues 449 to 459 (PDPKKITKRGP) show a composition bias toward basic and acidic residues. A DCXHWCLPGXXDXWN motif motif is present at residues 467–481 (DCLHWCMPGPVDTWN).

Belongs to the PC-esterase family. TBL subfamily. As to expression, expressed in roots, cauline leaves and flowers.

It localises to the membrane. May act as a bridging protein that binds pectin and other cell wall polysaccharides. Probably involved in maintaining esterification of pectins. May be involved in the specific O-acetylation of cell wall polymers. This is Protein YLS7 (YLS7) from Arabidopsis thaliana (Mouse-ear cress).